The sequence spans 344 residues: Lipase chaperone (344 aa).

The chain crosses the membrane as a helical span at residues 14–34 (VAVYGAVGLAAIAGVAIWSGA).

It belongs to the lipase chaperone family.

The protein resides in the cell inner membrane. In terms of biological role, may be involved in the folding of the extracellular lipase during its passage through the periplasm. In Burkholderia ambifaria (strain MC40-6), this protein is Lipase chaperone.